Here is a 107-residue protein sequence, read N- to C-terminus: U1-lycotoxin-Ls1b (107 aa).

An N-terminal signal peptide occupies residues 1-20 (MMKVLVVIALLVTLISYSSS). Positions 21 to 41 (EGIDDLEADELLSLMANEQTR) are excised as a propeptide. Intrachain disulfides connect Cys44–Cys59, Cys51–Cys68, Cys58–Cys86, and Cys70–Cys84.

It belongs to the neurotoxin 19 (CSTX) family. 04 (U1-Lctx) subfamily. In terms of tissue distribution, expressed by the venom gland.

Its subcellular location is the secreted. This Lycosa singoriensis (Wolf spider) protein is U1-lycotoxin-Ls1b.